The sequence spans 424 residues: Serine hydroxymethyltransferase (424 aa).

Residues L123 and 127-129 contribute to the (6S)-5,6,7,8-tetrahydrofolate site; that span reads GHL. Residue K232 is modified to N6-(pyridoxal phosphate)lysine. E245 lines the (6S)-5,6,7,8-tetrahydrofolate pocket.

Belongs to the SHMT family. In terms of assembly, homodimer. The cofactor is pyridoxal 5'-phosphate.

It is found in the cytoplasm. It catalyses the reaction (6R)-5,10-methylene-5,6,7,8-tetrahydrofolate + glycine + H2O = (6S)-5,6,7,8-tetrahydrofolate + L-serine. It participates in one-carbon metabolism; tetrahydrofolate interconversion. It functions in the pathway amino-acid biosynthesis; glycine biosynthesis; glycine from L-serine: step 1/1. Catalyzes the reversible interconversion of serine and glycine with tetrahydrofolate (THF) serving as the one-carbon carrier. This reaction serves as the major source of one-carbon groups required for the biosynthesis of purines, thymidylate, methionine, and other important biomolecules. Also exhibits THF-independent aldolase activity toward beta-hydroxyamino acids, producing glycine and aldehydes, via a retro-aldol mechanism. This chain is Serine hydroxymethyltransferase, found in Kocuria rhizophila (strain ATCC 9341 / DSM 348 / NBRC 103217 / DC2201).